We begin with the raw amino-acid sequence, 472 residues long: Tubulin gamma chain (472 aa).

142 to 148 (AGGTGSG) contributes to the GTP binding site.

It belongs to the tubulin family. Component of the gamma-tubulin small complex (gamma-TuSC) composed of tubulin gamma chain, gamma-tubulin complex protein 2 (GCP2) and gamma-tubulin complex protein 3 (GCP3). Interacts with GCP2 and GCP3. Interacts with EB1.

The protein localises to the cytoplasm. It is found in the cytoskeleton. It localises to the flagellum axoneme. Its subcellular location is the flagellum basal body. The protein resides in the spindle. The protein localises to the microtubule organizing center. Tubulin is the major constituent of microtubules (Potential). The gamma chain is found at microtubule organizing centers (MTOC) such as the centrosome. Component of the gamma-tubulin small complex (gamma-TuSC) involved in microtubule nucleation for the formation of median bodies and in the biogenesis of flagella. Gamma-TuSC may be required for the correct positioning of EB1 within the trophozoites. The protein is Tubulin gamma chain of Giardia intestinalis (strain ATCC 50803 / WB clone C6) (Giardia lamblia).